We begin with the raw amino-acid sequence, 570 residues long: Sulfite reductase [NADPH] hemoprotein beta-component (570 aa).

Cys-434, Cys-440, Cys-479, and Cys-483 together coordinate [4Fe-4S] cluster. Cys-483 provides a ligand contact to siroheme.

Belongs to the nitrite and sulfite reductase 4Fe-4S domain family. As to quaternary structure, alpha(8)-beta(8). The alpha component is a flavoprotein, the beta component is a hemoprotein. Siroheme is required as a cofactor. It depends on [4Fe-4S] cluster as a cofactor.

It catalyses the reaction hydrogen sulfide + 3 NADP(+) + 3 H2O = sulfite + 3 NADPH + 4 H(+). The protein operates within sulfur metabolism; hydrogen sulfide biosynthesis; hydrogen sulfide from sulfite (NADPH route): step 1/1. Functionally, component of the sulfite reductase complex that catalyzes the 6-electron reduction of sulfite to sulfide. This is one of several activities required for the biosynthesis of L-cysteine from sulfate. This chain is Sulfite reductase [NADPH] hemoprotein beta-component, found in Salmonella paratyphi A (strain ATCC 9150 / SARB42).